The following is a 306-amino-acid chain: Beta-lactamase (306 aa).

The first 34 residues, 1-34 (MNVKRKATLKFGICIGLLCVSFTGFNSLFGSTHA), serve as a signal peptide directing secretion. S89 (acyl-ester intermediate) is an active-site residue. Residue 251–253 (KSG) participates in substrate binding.

It belongs to the class-A beta-lactamase family.

The catalysed reaction is a beta-lactam + H2O = a substituted beta-amino acid. Functionally, this protein is a beta-lactamase with a substrate specificity for penicillins. The sequence is that of Beta-lactamase (penP) from Bacillus amyloliquefaciens (Bacillus velezensis).